A 675-amino-acid chain; its full sequence is Vacuolar protein sorting-associated protein 5 (675 aa).

Disordered stretches follow at residues 1-26 (MDYE…QSLV), 65-84 (EWKD…EHDN), and 165-219 (RAQR…RREN). Residues 168–180 (RNSKRNHSLKAKR) are compositionally biased toward basic residues. Residues 195–204 (PLKKAEKENE) show a composition bias toward basic and acidic residues. Residues 279 to 394 (VAFKVEVKDP…LFLTSDDFSS (116 aa)) enclose the PX domain. The a 1,2-diacyl-sn-glycero-3-phospho-(1D-myo-inositol-3-phosphate) site is built by arginine 320, lysine 346, and arginine 360.

The protein belongs to the sorting nexin family. As to quaternary structure, component of the retromer complex which consists of VPS29, VPS26, VPS35, VPS5 and VPS17. Component of a retromer subcomplex consisting of VPSD5 and VPS17. Phosphorylated on serine residue(s).

The protein localises to the cytoplasm. It is found in the golgi apparatus membrane. Its subcellular location is the endosome membrane. Plays a role in vesicular protein sorting. Required for retention of late Golgi membrane proteins and vacuolar biogenesis. Component of the membrane-associated retromer complex which is essential in endosome-to-Golgi retrograde transport. The VPS5-VPS17 subcomplex may assemble onto the membrane to promote vesicle formation. The sequence is that of Vacuolar protein sorting-associated protein 5 (VPS5) from Saccharomyces cerevisiae (strain ATCC 204508 / S288c) (Baker's yeast).